A 318-amino-acid polypeptide reads, in one-letter code: Small ribosomal subunit biogenesis GTPase RsgA (318 aa).

The 165-residue stretch at 82–246 folds into the CP-type G domain; sequence RQDEIRTKSF…LIDSPGFQEF (165 aa). Residues 132–135 and 186–194 each bind GTP; these read NKSD and GPSGAGKST. The Zn(2+) site is built by Cys270, Cys275, His277, and Cys283.

It belongs to the TRAFAC class YlqF/YawG GTPase family. RsgA subfamily. Monomer. Associates with 30S ribosomal subunit, binds 16S rRNA. Zn(2+) is required as a cofactor.

It localises to the cytoplasm. Its function is as follows. One of several proteins that assist in the late maturation steps of the functional core of the 30S ribosomal subunit. Helps release RbfA from mature subunits. May play a role in the assembly of ribosomal proteins into the subunit. Circularly permuted GTPase that catalyzes slow GTP hydrolysis, GTPase activity is stimulated by the 30S ribosomal subunit. The sequence is that of Small ribosomal subunit biogenesis GTPase RsgA from Variovorax paradoxus (strain S110).